The primary structure comprises 20 residues: Antimicrobial peptide AJN-10 (20 aa).

The protein resides in the secreted. In terms of biological role, displays antimicrobial activity against the Gram-negative bacterium A.hydrophila. The chain is Antimicrobial peptide AJN-10 from Anguilla japonica (Japanese eel).